Reading from the N-terminus, the 484-residue chain is UDP-N-acetylmuramate--L-alanine ligase (484 aa).

Position 128–134 (128–134 (GTHGKTT)) interacts with ATP.

This sequence belongs to the MurCDEF family.

It is found in the cytoplasm. The catalysed reaction is UDP-N-acetyl-alpha-D-muramate + L-alanine + ATP = UDP-N-acetyl-alpha-D-muramoyl-L-alanine + ADP + phosphate + H(+). It participates in cell wall biogenesis; peptidoglycan biosynthesis. Functionally, cell wall formation. The sequence is that of UDP-N-acetylmuramate--L-alanine ligase from Shewanella loihica (strain ATCC BAA-1088 / PV-4).